A 467-amino-acid polypeptide reads, in one-letter code: MGTTLAEKVWADHLVRKGSDGAPDLLYIDLMLMHEVTSPQAFEGLRLAGRKPRHVDQLIATEDHNTPTVDIDRPNPDKTSALQLTTLEKNCKEFGVRLHPLGDADQGIVHAFAPILGLTQPGMTIVCGDSHTSTHGAFGALAFGIGTSEVEHVMATQTLSLKPFKTMAINVEGKLPADATAKDIILAIIAKIGTGGGQGYVIEYRGEAIRNLTMDERMTVCNMSIEAGARAGMIAPDETTFEYLKGRPHAPEGELWDQAVAYWKTLKTDDDAVFDKVVDIDASTLGPYVTWGTNPGQGLPITASVPEPDKIADATKRAAAERAITYMGLKPGMPIKDIAVDTVFIGSCTNGRIDDLRQAAAIMKGHHKAENIHRVLVVPASSRVRLQAEKEGLDKVFEDFGAEWRNAGCSMCLGMNPDKLVPNERSISTSNRNFEGRQGKGSRTHLASPSVAAATAIRGTISSPADL.

[4Fe-4S] cluster is bound by residues cysteine 348, cysteine 409, and cysteine 412. Residues 423–449 form a disordered region; the sequence is NERSISTSNRNFEGRQGKGSRTHLASP.

This sequence belongs to the aconitase/IPM isomerase family. LeuC type 1 subfamily. Heterodimer of LeuC and LeuD. The cofactor is [4Fe-4S] cluster.

It carries out the reaction (2R,3S)-3-isopropylmalate = (2S)-2-isopropylmalate. The protein operates within amino-acid biosynthesis; L-leucine biosynthesis; L-leucine from 3-methyl-2-oxobutanoate: step 2/4. In terms of biological role, catalyzes the isomerization between 2-isopropylmalate and 3-isopropylmalate, via the formation of 2-isopropylmaleate. In Bifidobacterium longum subsp. infantis (strain ATCC 15697 / DSM 20088 / JCM 1222 / NCTC 11817 / S12), this protein is 3-isopropylmalate dehydratase large subunit.